We begin with the raw amino-acid sequence, 779 residues long: Acyl-homoserine lactone acylase PvdQ (779 aa).

A signal peptide spans 1-25; sequence MIISRPLCGFVFAGLSFAVILPAQA. The propeptide at 202-223 is spacer peptide; sequence SQQVQALQLAAVRNQRFALERG. Ser-224 (nucleophile) is an active-site residue. The segment covering 731-746 has biased composition (polar residues); that stretch reads ESSNPQSAHSSDQTEA. The interval 731 to 752 is disordered; sequence ESSNPQSAHSSDQTEAFSKKQW.

Belongs to the peptidase S45 family. In terms of assembly, heterodimer of an alpha subunit and a beta subunit processed from the same precursor.

The protein localises to the periplasm. The catalysed reaction is an N-acyl-L-homoserine lactone + H2O = L-homoserine lactone + a carboxylate. Functionally, catalyzes the deacylation of acyl-homoserine lactone (AHL or acyl-HSL), releasing homoserine lactone (HSL) and the corresponding fatty acid. Possesses a specificity for the degradation of long-chain acyl-HSLs (side chains of 11 to 14 carbons in length). The polypeptide is Acyl-homoserine lactone acylase PvdQ (pvdQ) (Pseudomonas savastanoi pv. phaseolicola (strain 1448A / Race 6) (Pseudomonas syringae pv. phaseolicola (strain 1448A / Race 6))).